Reading from the N-terminus, the 299-residue chain is Zeta-sarcoglycan (299 aa).

Residues 1 to 37 (MTREQYILATQQNNLPRTENAQLYPVGIYGWRKRCLY) are Cytoplasmic-facing. Residues 38–58 (FFVLLLLVTMIVNLAMTIWIL) form a helical; Signal-anchor for type II membrane protein membrane-spanning segment. Residues 59–299 (KVMNFTVDGM…QSSSNICLWS (241 aa)) lie on the Extracellular side of the membrane. N-linked (GlcNAc...) asparagine glycans are attached at residues Asn-62 and Asn-110. The cysteines at positions 273 and 289 are disulfide-linked.

The protein belongs to the sarcoglycan beta/delta/gamma/zeta family.

It localises to the cell membrane. The protein resides in the sarcolemma. It is found in the cytoplasm. The protein localises to the cytoskeleton. In terms of biological role, component of the sarcoglycan complex, a subcomplex of the dystrophin-glycoprotein complex which forms a link between the F-actin cytoskeleton and the extracellular matrix. May play a role in the maintenance of striated muscle membrane stability. The sequence is that of Zeta-sarcoglycan (SGCZ) from Homo sapiens (Human).